A 239-amino-acid polypeptide reads, in one-letter code: Major centromere autoantigen B (239 aa).

The disordered stretch occupies residues 28–185 (AGFGGGPNAT…DDEVPVPSFG (158 aa)). Threonine 37 and threonine 39 each carry phosphothreonine. 2 stretches are compositionally biased toward acidic residues: residues 46-117 (GEEE…EAED) and 148-179 (GEED…DDEV). A homodimerization region spans residues 176–239 (DDEVPVPSFG…AGARGLGHQS (64 aa)).

In terms of assembly, antiparallel homodimer. Interacts with CENPT. Identified in a centromere complex containing histones H2A, H2B and H4, and at least CENPA, CENPB, CENPC, CENPT, CENPN, HJURP, SUPT16H, SSRP1 and RSF1. Post-translationally, poly-ADP-ribosylated by PARP1. N-terminally methylated by METTL11A/NTM1. Alpha-N-methylation is stimulated in response extracellular stimuli, including increased cell density and heat shock, and seems to facilitate binding to CENP-B boxes. Chromatin-bound CENP-B is primarily trimethylated.

The protein localises to the nucleus. It is found in the chromosome. The protein resides in the centromere. Interacts with centromeric heterochromatin in chromosomes and binds to a specific 17 bp subset of alphoid satellite DNA, called the CENP-B box. May organize arrays of centromere satellite DNA into a higher-order structure which then directs centromere formation and kinetochore assembly in mammalian chromosomes. The polypeptide is Major centromere autoantigen B (CENPB) (Ovis aries (Sheep)).